A 239-amino-acid polypeptide reads, in one-letter code: MIELIPAIDIIDGKCVRLTQGDYATKKVYNEDPLEVAKMFEGNGIRRLHVVDLDGAREGRIINYRILERIATRTSLIIDFGGGLKQEDDLEIAFESGAQMVTGGSIAVKNPEMFTSWISKFGSEKIILGADAKEKKIAISGWEETTSQELVPFIKGYYDKGITKVICTDIARDGMLQGPAIDLYKEIRDEIPFLYIIASGGVSSIEDIEKLSEAGIPAVIFGKAIYEGKIQLKDLLRFT.

D9 functions as the Proton acceptor in the catalytic mechanism. Residue D131 is the Proton donor of the active site.

This sequence belongs to the HisA/HisF family.

It localises to the cytoplasm. The catalysed reaction is 1-(5-phospho-beta-D-ribosyl)-5-[(5-phospho-beta-D-ribosylamino)methylideneamino]imidazole-4-carboxamide = 5-[(5-phospho-1-deoxy-D-ribulos-1-ylimino)methylamino]-1-(5-phospho-beta-D-ribosyl)imidazole-4-carboxamide. Its pathway is amino-acid biosynthesis; L-histidine biosynthesis; L-histidine from 5-phospho-alpha-D-ribose 1-diphosphate: step 4/9. The protein is 1-(5-phosphoribosyl)-5-[(5-phosphoribosylamino)methylideneamino] imidazole-4-carboxamide isomerase of Parabacteroides distasonis (strain ATCC 8503 / DSM 20701 / CIP 104284 / JCM 5825 / NCTC 11152).